A 377-amino-acid chain; its full sequence is N5-carboxyaminoimidazole ribonucleotide synthase (377 aa).

Residues Arg93, Lys133, 138 to 144 (GYDGKGQ), 175 to 178 (EEFV), Glu183, His206, and 257 to 258 (NE) each bind ATP. The ATP-grasp domain occupies 97 to 287 (KALLDHAGVR…QFENHLRAVC (191 aa)).

It belongs to the PurK/PurT family. Homodimer.

It carries out the reaction 5-amino-1-(5-phospho-beta-D-ribosyl)imidazole + hydrogencarbonate + ATP = 5-carboxyamino-1-(5-phospho-D-ribosyl)imidazole + ADP + phosphate + 2 H(+). Its pathway is purine metabolism; IMP biosynthesis via de novo pathway; 5-amino-1-(5-phospho-D-ribosyl)imidazole-4-carboxylate from 5-amino-1-(5-phospho-D-ribosyl)imidazole (N5-CAIR route): step 1/2. Catalyzes the ATP-dependent conversion of 5-aminoimidazole ribonucleotide (AIR) and HCO(3)(-) to N5-carboxyaminoimidazole ribonucleotide (N5-CAIR). The protein is N5-carboxyaminoimidazole ribonucleotide synthase of Vibrio vulnificus (strain CMCP6).